The primary structure comprises 179 residues: Large ribosomal subunit protein uL5 (179 aa).

Belongs to the universal ribosomal protein uL5 family. Part of the 50S ribosomal subunit; part of the 5S rRNA/L5/L18/L25 subcomplex. Contacts the 5S rRNA and the P site tRNA. Forms a bridge to the 30S subunit in the 70S ribosome.

Functionally, this is one of the proteins that bind and probably mediate the attachment of the 5S RNA into the large ribosomal subunit, where it forms part of the central protuberance. In the 70S ribosome it contacts protein S13 of the 30S subunit (bridge B1b), connecting the 2 subunits; this bridge is implicated in subunit movement. Contacts the P site tRNA; the 5S rRNA and some of its associated proteins might help stabilize positioning of ribosome-bound tRNAs. This is Large ribosomal subunit protein uL5 from Edwardsiella ictaluri (strain 93-146).